Reading from the N-terminus, the 352-residue chain is Putative GATA transcription factor 22 (352 aa).

The tract at residues 27–53 (SLHHHLQQQQQQQQHFHHQASSNPSSL) is disordered. Positions 33-53 (QQQQQQQQHFHHQASSNPSSL) are enriched in low complexity. A Nuclear localization signal motif is present at residues 112 to 119 (PKKETRLK). The segment at 163–189 (AIITTSDSSKQHTNNDQSSNLSNSERQ) is disordered. Over residues 165 to 189 (ITTSDSSKQHTNNDQSSNLSNSERQ) the composition is skewed to polar residues. A GATA-type zinc finger spans residues 195-249 (DCVIRICSDCNTTKTPLWRSGPRGPKSLCNACGIRQRKARRAAMATATATAVSGV).

The protein belongs to the type IV zinc-finger family. Class B subfamily. Forms heterodimers with GATA18. As to expression, expressed predominantly in leaves, and barely in stems, flowers and siliques.

It is found in the nucleus. Functionally, transcriptional regulator that specifically binds 5'-GATA-3' or 5'-GAT-3' motifs within gene promoters. Involved in the modulation of chloroplast development, growth and division in a cytokinin-dependent manner. Repressor of the gibberellic acid (GA) signaling pathway that regulates flowering and modulates greening, in a SOC1-dependent manner. Prevents the accumulation of SOC1 during flowering. Promotes chlorophyll biosynthesis throughout the plant, by regulating chlorophyll biosynthetic genes (e.g. HEMA1 and GUN4) and chloroplast localized glutamate synthase (e.g. GLU1). Involved in the regulation of sugar-sensing genes (e.g. HXK1, HXK2, STP13 and PLT6). Regulator of germination, senescence, elongation growth and flowering time. Influences also leaf starch content. This is Putative GATA transcription factor 22 from Arabidopsis thaliana (Mouse-ear cress).